The chain runs to 99 residues: Ferredoxin, heterocyst (99 aa).

In terms of domain architecture, 2Fe-2S ferredoxin-type spans 4 to 96 (YQVRLINKKQ…NCTIKTHQEP (93 aa)). C42, C47, C50, and C80 together coordinate [2Fe-2S] cluster.

This sequence belongs to the 2Fe2S plant-type ferredoxin family. Requires [2Fe-2S] cluster as cofactor.

Its function is as follows. Ferredoxins are iron-sulfur proteins that transfer electrons in a wide variety of metabolic reactions. Donates electrons to the nitrogenase. The chain is Ferredoxin, heterocyst (fdxH) from Nostoc sp. (strain PCC 7120 / SAG 25.82 / UTEX 2576).